Reading from the N-terminus, the 45-residue chain is Pseudo-hevein (45 aa).

The 43-residue stretch at 1 to 43 (EQCGRQAGGKLCPNNLCCSQYGWCGSSDDYCSPSKNCQSNCKG) folds into the Chitin-binding type-1 domain. Cystine bridges form between Cys3–Cys18, Cys12–Cys24, Cys17–Cys31, and Cys37–Cys41.

In terms of biological role, N-acetyl-D-glucosamine / N-acetyl-D-neuraminic acid binding lectin. Can inhibit fungal growth. This is Pseudo-hevein from Hevea brasiliensis (Para rubber tree).